Here is a 92-residue protein sequence, read N- to C-terminus: UPF0728 protein C10orf53 homolog (92 aa).

The protein belongs to the UPF0728 family.

This Danio rerio (Zebrafish) protein is UPF0728 protein C10orf53 homolog.